The sequence spans 88 residues: Long neurotoxin 20 (88 aa).

A signal peptide spans 1–21; the sequence is MKTLLLTLVVVTIVCLDLGNS. Disulfide bonds link C24–C42, C35–C63, C48–C52, C67–C78, and C79–C84.

The protein belongs to the three-finger toxin family. Long-chain subfamily. Type II alpha-neurotoxin sub-subfamily. Expressed by the venom gland.

It localises to the secreted. Its function is as follows. Binds with high affinity to muscular (alpha-1/CHRNA1) and neuronal (alpha-7/CHRNA7) nicotinic acetylcholine receptor (nAChR) and inhibits acetylcholine from binding to the receptor, thereby impairing neuromuscular and neuronal transmission. The polypeptide is Long neurotoxin 20 (Drysdalia coronoides (White-lipped snake)).